The following is an 887-amino-acid chain: Phosphatidylinositol 3-kinase catalytic subunit type 3 (887 aa).

The C2 PI3K-type domain maps to 35–184 (YKAVLEDPML…LAKLTKAHRQ (150 aa)). The interval 149-170 (VEADGSEPTKTPGRTSSTLSED) is disordered. A compositionally biased stretch (polar residues) spans 156–170 (PTKTPGRTSSTLSED). Threonine 163 bears the Phosphothreonine; by AMPK mark. A Phosphoserine; by AMPK modification is found at serine 165. Serine 244, serine 261, and serine 282 each carry phosphoserine. The 238-residue stretch at 283 to 520 (DHDLKPNAAT…PKTHEMYLNV (238 aa)) folds into the PIK helical domain. Residues 447–467 (TSPLPSVSSPPPASKTKEVPD) form a disordered region. A PI3K/PI4K catalytic domain is found at 605-871 (IPETATLFKS…LIDESVHALF (267 aa)). The segment at 611-617 (LFKSALM) is G-loop. The catalytic loop stretch occupies residues 740 to 748 (GVGDRHLDN). An activation loop region spans residues 759 to 780 (HIDFGYILGRDPKPLPPPMKLN).

It belongs to the PI3/PI4-kinase family. As to quaternary structure, component of the PI3K (PI3KC3/PI3K-III/class III phosphatidylinositol 3-kinase) complex the core of which is composed of the catalytic subunit PIK3C3, the regulatory subunit PIK3R4 and BECN1 associating with additional regulatory/auxiliary subunits to form alternative complex forms. Alternative complex forms containing a fourth regulatory subunit in a mutually exclusive manner are: the PI3K complex I (PI3KC3-C1) containing ATG14, and the PI3K complex II (PI3KC3-C2) containing UVRAG. PI3KC3-C1 displays a V-shaped architecture with PIK3R4 serving as a bridge between PIK3C3 and the ATG14:BECN1 subcomplex. Both, PI3KC3-C1 and PI3KC3-C2, can associate with further regulatory subunits such as RUBCN, SH3GLB1/Bif-1 and AMBRA1. PI3KC3-C1 probably associates with PIK3CB. Interacts with RAB7A in the presence of PIK3R4. Interacts with AMBRA1. Interacts with BECN1P1/BECN2. Interacts with SLAMF1. May be a component of a complex composed of RAB5A (in GDP-bound form), DYN2 and PIK3C3. Interacts with NCKAP1L. Interacts with ATG14; this interaction is increased in the absence of TMEM39A. Interacts with STEEP1; the interaction is STING1-dependent and required for trafficking of STING1 from the endoplasmic reticulum. Interacts with YWHAG. Interacts with ARMC3. Mn(2+) serves as cofactor. In terms of processing, ubiquitinated via 'Lys-29'- and 'Lys-48'-linked ubiquitination by UBE3C, promoting its degradation. Deubiquitination by ZRANB1/TRABID promotes its stabilization, leading to autophagosome maturation. Ubiquitously expressed, with a highest expression in skeletal muscle.

The protein localises to the midbody. Its subcellular location is the late endosome. The protein resides in the cytoplasmic vesicle. It localises to the autophagosome. The enzyme catalyses a 1,2-diacyl-sn-glycero-3-phospho-(1D-myo-inositol) + ATP = a 1,2-diacyl-sn-glycero-3-phospho-(1D-myo-inositol-3-phosphate) + ADP + H(+). Its function is as follows. Catalytic subunit of the PI3K complex that mediates formation of phosphatidylinositol 3-phosphate; different complex forms are believed to play a role in multiple membrane trafficking pathways: PI3KC3-C1 is involved in initiation of autophagosomes and PI3KC3-C2 in maturation of autophagosomes and endocytosis. As part of PI3KC3-C1, promotes endoplasmic reticulum membrane curvature formation prior to vesicle budding. Involved in regulation of degradative endocytic trafficking and required for the abscission step in cytokinesis, probably in the context of PI3KC3-C2. Involved in the transport of lysosomal enzyme precursors to lysosomes. Required for transport from early to late endosomes. In terms of biological role, (Microbial infection) Kinase activity is required for SARS coronavirus-2/SARS-CoV-2 replication. The protein is Phosphatidylinositol 3-kinase catalytic subunit type 3 of Homo sapiens (Human).